We begin with the raw amino-acid sequence, 254 residues long: Cell wall biogenesis protein NCW2 (254 aa).

The N-terminal stretch at 1 to 17 (MKACSILFTTLITLAAA) is a signal peptide. Disordered regions lie at residues 19 to 57 (KDSG…SAST), 111 to 143 (TSTA…DGPV), and 167 to 191 (ATTD…SSTK). Low complexity predominate over residues 27–42 (QNSEDSSQKESSNSQE). Over residues 43 to 57 (ITPTTTKEAQESAST) the composition is skewed to polar residues. Residues 111-139 (TSTASVQPTGETSSGITNSASSSTTSTST) show a composition bias toward low complexity. Asparagine 229 is a glycosylation site (N-linked (GlcNAc...) asparagine). Asparagine 232 is lipidated: GPI-anchor amidated asparagine. The propeptide at 233-254 (GAFAGTHIAYGAGAFAVGALLL) is removed in mature form.

The protein localises to the cell membrane. Its function is as follows. Cell wall biogenesis protein that participates in the organization of the beta-glucan assembly. Involved in the mechanism responsible for cell tolerance to polyhexamethylene biguanide (PHMB), an antifungal agent. This chain is Cell wall biogenesis protein NCW2, found in Saccharomyces cerevisiae (strain ATCC 204508 / S288c) (Baker's yeast).